The chain runs to 214 residues: Cysteine-rich venom protein LEI1 (214 aa).

A signal peptide spans 1–18 (MIAFILLSLAAVLQQSFG). The SCP domain occupies 37-165 (VNMHNSLRRS…YYSYFYVCQY (129 aa)). Intrachain disulfides connect Cys-74-Cys-152, Cys-91-Cys-166, Cys-147-Cys-163, Cys-185-Cys-192, and Cys-188-Cys-197. In terms of domain architecture, ShKT spans 201-214 (CTVENKFTNCNTLV).

The protein belongs to the CRISP family. In terms of tissue distribution, expressed by the venom gland.

It is found in the secreted. Its function is as follows. Blocks contraction of smooth muscle elicited by high potassium-induced depolarization, but does not block caffeine-stimulated contraction. May target voltage-gated calcium channels on smooth muscle. This Leioheterodon madagascariensis (Malagasy giant hognose snake) protein is Cysteine-rich venom protein LEI1.